The primary structure comprises 298 residues: Osmoprotective compounds uptake permease protein GgtD (298 aa).

A run of 7 helical transmembrane segments spans residues 26–46 (IHIAILTIAFIWTLPSLGLFI), 97–117 (IAVPATVIPIAIATFAAYAFA), 126–146 (LLFILVVCLLVVPLQTTLIPV), 158–178 (TFLGVWLAHTAYGLPLGIYLL), 207–227 (LIVPLSMPAIASFAVFQFLWV), 231–251 (LLVALVYLGGTADVAPVTIQL), and 263–283 (YLLTAGAFISMIVPLMVFFGL). One can recognise an ABC transmembrane type-1 domain in the interval 91 to 283 (FLNSLTIAVP…IVPLMVFFGL (193 aa)).

Belongs to the binding-protein-dependent transport system permease family. As to quaternary structure, the complex is composed of two ATP-binding proteins (GgtA), two transmembrane proteins (GgtC and GgtD) and a solute-binding protein (GgtB).

The protein localises to the cell membrane. Part of the ABC transporter complex GgtABCD involved in the uptake of the osmoprotective compounds glucosylglycerol (GG), sucrose and trehalose. Responsible for the translocation of the substrate across the membrane. The polypeptide is Osmoprotective compounds uptake permease protein GgtD (Synechocystis sp. (strain ATCC 27184 / PCC 6803 / Kazusa)).